Consider the following 183-residue polypeptide: MFLMVEKKPVPEDWPHIVGDYVVGDEESPVAVVTLGSHMEDEPVKAGAAISGPLHTENLGIEKVVGNVIANPNLRFLVVCGAEVMGHITGQTMKALHSNGVDLETGRIIGATGAIPYIENMPEEAIERFRRQVELVDMVDVEDPDSIAARIQECVVHDSGAMEEEPLILKVPEIGKGDSEENT.

The Cytoplasmic segment spans residues 1 to 101 (MFLMVEKKPV…TMKALHSNGV (101 aa)). Residue His-87 participates in 5-hydroxybenzimidazolylcob(I)amide binding. The chain crosses the membrane as a helical span at residues 102–118 (DLETGRIIGATGAIPYI). The Extracellular segment spans residues 119 to 183 (ENMPEEAIER…IGKGDSEENT (65 aa)).

It belongs to the MtrA family. As to quaternary structure, the complex is composed of 8 subunits; MtrA, MtrB, MtrC, MtrD, MtrE, MtrF, MtrG and MtrH. 5-hydroxybenzimidazolylcob(I)amide is required as a cofactor.

It is found in the cell membrane. The catalysed reaction is 5-methyl-5,6,7,8-tetrahydromethanopterin + coenzyme M + 2 Na(+)(in) = 5,6,7,8-tetrahydromethanopterin + methyl-coenzyme M + 2 Na(+)(out). Its pathway is one-carbon metabolism; methanogenesis from CO(2); methyl-coenzyme M from 5,10-methylene-5,6,7,8-tetrahydromethanopterin: step 2/2. In terms of biological role, part of a complex that catalyzes the formation of methyl-coenzyme M and tetrahydromethanopterin from coenzyme M and methyl-tetrahydromethanopterin. This is an energy-conserving, sodium-ion translocating step. This chain is Tetrahydromethanopterin S-methyltransferase subunit A 2, found in Methanothermobacter thermautotrophicus (strain ATCC 29096 / DSM 1053 / JCM 10044 / NBRC 100330 / Delta H) (Methanobacterium thermoautotrophicum).